A 137-amino-acid polypeptide reads, in one-letter code: SPbeta prophage-derived uncharacterized protein YoqU (137 aa).

The polypeptide is SPbeta prophage-derived uncharacterized protein YoqU (yoqU) (Bacillus subtilis (strain 168)).